The sequence spans 85 residues: Small ribosomal subunit protein eS21 (85 aa).

Belongs to the eukaryotic ribosomal protein eS21 family. As to quaternary structure, component of the 40S small ribosomal subunit.

It is found in the cytoplasm. Its subcellular location is the cytosol. The protein resides in the rough endoplasmic reticulum. The polypeptide is Small ribosomal subunit protein eS21 (RPS21) (Branchiostoma belcheri (Amphioxus)).